The primary structure comprises 385 residues: Carbamoyl phosphate synthase small chain (385 aa).

A CPSase region spans residues 1-196 (MEDALGQLAV…KLEKKKKFLF (196 aa)). The L-glutamine site is built by Ser51, Gly245, and Gly247. In terms of domain architecture, Glutamine amidotransferase type-1 spans 197-384 (HIVVYDFGVK…IKLLNQVKFS (188 aa)). Residue Cys273 is the Nucleophile of the active site. Leu274, Gln277, Asn315, and Phe318 together coordinate L-glutamine. Catalysis depends on residues His357 and Glu359.

The protein belongs to the CarA family. Composed of two chains; the small (or glutamine) chain promotes the hydrolysis of glutamine to ammonia, which is used by the large (or ammonia) chain to synthesize carbamoyl phosphate. Tetramer of heterodimers (alpha,beta)4.

It catalyses the reaction hydrogencarbonate + L-glutamine + 2 ATP + H2O = carbamoyl phosphate + L-glutamate + 2 ADP + phosphate + 2 H(+). The enzyme catalyses L-glutamine + H2O = L-glutamate + NH4(+). It participates in amino-acid biosynthesis; L-arginine biosynthesis; carbamoyl phosphate from bicarbonate: step 1/1. Its pathway is pyrimidine metabolism; UMP biosynthesis via de novo pathway; (S)-dihydroorotate from bicarbonate: step 1/3. Its function is as follows. Small subunit of the glutamine-dependent carbamoyl phosphate synthetase (CPSase). CPSase catalyzes the formation of carbamoyl phosphate from the ammonia moiety of glutamine, carbonate, and phosphate donated by ATP, constituting the first step of 2 biosynthetic pathways, one leading to arginine and/or urea and the other to pyrimidine nucleotides. The small subunit (glutamine amidotransferase) binds and cleaves glutamine to supply the large subunit with the substrate ammonia. This is Carbamoyl phosphate synthase small chain from Buchnera aphidicola subsp. Schizaphis graminum (strain Sg).